The primary structure comprises 221 residues: Cyclin-U3-1 (221 aa).

The protein belongs to the cyclin family. Cyclin U/P subfamily. In terms of assembly, interacts with CDKA-1 and CDKB1-1. In terms of tissue distribution, expressed in roots, stems and flowers. Expressed in the shoot apex, leaf primordia and young leaves.

This Arabidopsis thaliana (Mouse-ear cress) protein is Cyclin-U3-1 (CYCU3-1).